Consider the following 238-residue polypeptide: tRNA (guanine-N(1)-)-methyltransferase (238 aa).

132-137 (IGDYVL) contacts S-adenosyl-L-methionine.

Belongs to the RNA methyltransferase TrmD family. As to quaternary structure, homodimer.

It localises to the cytoplasm. The enzyme catalyses guanosine(37) in tRNA + S-adenosyl-L-methionine = N(1)-methylguanosine(37) in tRNA + S-adenosyl-L-homocysteine + H(+). In terms of biological role, specifically methylates guanosine-37 in various tRNAs. The polypeptide is tRNA (guanine-N(1)-)-methyltransferase (Nitrobacter hamburgensis (strain DSM 10229 / NCIMB 13809 / X14)).